Consider the following 252-residue polypeptide: Phosphosulfolactate synthase (252 aa).

This sequence belongs to the phosphosulfolactate synthase family.

It carries out the reaction (2R)-O-phospho-3-sulfolactate = phosphoenolpyruvate + sulfite + H(+). Functionally, catalyzes the addition of sulfite to phosphoenolpyruvate (PEP) to yield (2R)-phospho-3-sulfolactate (PSL). Is probably involved in the biosynthesis of L-sulfolactate, which is a major constituent of sporulating cells and mature spores. The chain is Phosphosulfolactate synthase (yitD) from Bacillus subtilis (strain 168).